The primary structure comprises 329 residues: MADKGSVAAKSLTNSAPLSIFSYCAASILMTVTNKYAVSGVDFNFNFFLLAVQGIVCITLISSLKQLNVITFREFNKVEAKKWFPIAVLLVVMIYTSSKALQYLSIPIYTIFKNLTIILIAYGEVIWFGGRVTNLALGSFVLMVLSSAVASYGDSNVDTGKLNFNIGYFWMFTNCFSSAAFVLFMRKRIKLTNFKDFDTMYYNNLLSIPILLFASLTTEDWSAKNIAQNFPEDTKYAVIASMIISGMSAVGISYTSAWCVRVTSSTTYSMVGALNKLPIALSGLLFFKAPINFYSISSIFIGFAAGLVYAIAKQKQKKEDELQLPTDKS.

The Cytoplasmic portion of the chain corresponds to 1-11 (MADKGSVAAKS). A helical transmembrane segment spans residues 12–32 (LTNSAPLSIFSYCAASILMTV). Topologically, residues 33–40 (TNKYAVSG) are lumenal. A helical transmembrane segment spans residues 41–61 (VDFNFNFFLLAVQGIVCITLI). The Cytoplasmic portion of the chain corresponds to 62–83 (SSLKQLNVITFREFNKVEAKKW). A helical membrane pass occupies residues 84 to 104 (FPIAVLLVVMIYTSSKALQYL). Over 105–107 (SIP) the chain is Lumenal. A helical membrane pass occupies residues 108-128 (IYTIFKNLTIILIAYGEVIWF). Topologically, residues 129–131 (GGR) are cytoplasmic. A helical transmembrane segment spans residues 132–152 (VTNLALGSFVLMVLSSAVASY). Residues 153-163 (GDSNVDTGKLN) are Lumenal-facing. A helical transmembrane segment spans residues 164–184 (FNIGYFWMFTNCFSSAAFVLF). Residues 185–196 (MRKRIKLTNFKD) are Cytoplasmic-facing. A helical membrane pass occupies residues 197–217 (FDTMYYNNLLSIPILLFASLT). Residues 218-237 (TEDWSAKNIAQNFPEDTKYA) lie on the Lumenal side of the membrane. A helical transmembrane segment spans residues 238 to 258 (VIASMIISGMSAVGISYTSAW). Topologically, residues 259 to 266 (CVRVTSST) are cytoplasmic. The helical transmembrane segment at 267 to 287 (TYSMVGALNKLPIALSGLLFF) threads the bilayer. Residues 288–290 (KAP) lie on the Lumenal side of the membrane. Residues 291-311 (INFYSISSIFIGFAAGLVYAI) traverse the membrane as a helical segment. The Cytoplasmic segment spans residues 312–329 (AKQKQKKEDELQLPTDKS).

Belongs to the TPT transporter family. SLC35D subfamily. As to quaternary structure, homooligomer.

It is found in the golgi apparatus membrane. The protein localises to the cytoplasmic vesicle membrane. The protein resides in the endoplasmic reticulum membrane. In terms of biological role, involved in the import of GDP-mannose from the cytoplasm into the Golgi lumen. This is GDP-mannose transporter (VIG4) from Komagataella pastoris (Yeast).